The sequence spans 774 residues: Alpha,alpha-trehalose phosphorylase (774 aa).

369 to 370 (WD) contributes to the substrate binding site. Glu-498 functions as the Proton donor in the catalytic mechanism. Residue 610–611 (KQ) participates in substrate binding.

This sequence belongs to the glycosyl hydrolase 65 family. Homodimer.

It catalyses the reaction alpha,alpha-trehalose + phosphate = beta-D-glucose 1-phosphate + D-glucose. Its pathway is glycan degradation; trehalose degradation. With respect to regulation, inhibited by Cu(2+), Hg(2+), Mg(2+), Mn(2+), Pb(2+) and Zn(2+). In terms of biological role, catalyzes the reversible phosphorolytic cleavage of trehalose. Phosphorolysis is specific for trehalose, but D-xylose, D-galactose, L-arabinose, D-fucose, L-fucose, D-glucosamine and 2-deoxy D-glucose can act as substitutes for D-glucose in the synthetic reaction. The sequence is that of Alpha,alpha-trehalose phosphorylase (treP) from Thermoanaerobacter brockii (Thermoanaerobium brockii).